A 316-amino-acid polypeptide reads, in one-letter code: MTKEFHHVTVLLHETVDMLDIKPNGIYVDATLGGSGHSAYLLSKLSEQGHLYCFDQDQKAIDNAQVTLKSYIDKGQVTFIKDNFRHLKARLTALGVDEIDGILYDLGVSSPQLDERERGFSYNQDAPLDMRMDRQAPLTAYDVVNTYPFNDLVKIFFKYGEDKFSKQIARKIEQARAIKPIETTTELAELIKAAKPAKELKKKGHPAKQIFQAIRIEVNDELGAADESIQDAMELLALDGRISVITFHSLEDRLTKQLFKEASTVDVPKGLPFIPEDMKPTFELVSRKPILPSQEELAANNRAHSAKLRVAKKIRK.

Residues serine 35–histidine 37, aspartate 55, phenylalanine 84, aspartate 105, and glutamine 112 each bind S-adenosyl-L-methionine.

This sequence belongs to the methyltransferase superfamily. RsmH family.

The protein resides in the cytoplasm. It carries out the reaction cytidine(1402) in 16S rRNA + S-adenosyl-L-methionine = N(4)-methylcytidine(1402) in 16S rRNA + S-adenosyl-L-homocysteine + H(+). Functionally, specifically methylates the N4 position of cytidine in position 1402 (C1402) of 16S rRNA. In Streptococcus dysgalactiae subsp. equisimilis (strain GGS_124), this protein is Ribosomal RNA small subunit methyltransferase H.